Reading from the N-terminus, the 138-residue chain is Putative acyl-CoA thioesterase YneP (138 aa).

Asp-16 is a catalytic residue.

It belongs to the 4-hydroxybenzoyl-CoA thioesterase family.

Its function is as follows. Has acyl-CoA thioesterase activity. The polypeptide is Putative acyl-CoA thioesterase YneP (yneP) (Bacillus subtilis (strain 168)).